The sequence spans 206 residues: Protein GrpE (206 aa).

The tract at residues 1-36 is disordered; sequence MTDSNGPKDNNQDQAQAAADPVVSKPYIMPDDPEDG.

The protein belongs to the GrpE family. As to quaternary structure, homodimer.

It is found in the cytoplasm. Its function is as follows. Participates actively in the response to hyperosmotic and heat shock by preventing the aggregation of stress-denatured proteins, in association with DnaK and GrpE. It is the nucleotide exchange factor for DnaK and may function as a thermosensor. Unfolded proteins bind initially to DnaJ; upon interaction with the DnaJ-bound protein, DnaK hydrolyzes its bound ATP, resulting in the formation of a stable complex. GrpE releases ADP from DnaK; ATP binding to DnaK triggers the release of the substrate protein, thus completing the reaction cycle. Several rounds of ATP-dependent interactions between DnaJ, DnaK and GrpE are required for fully efficient folding. This Rhodopseudomonas palustris (strain HaA2) protein is Protein GrpE.